Reading from the N-terminus, the 791-residue chain is Genome polyprotein (791 aa).

Positions 1–15 are interaction with host EXOC1; the sequence is MNNQRKKTGRPSFNM. Over 1 to 101 the chain is Cytoplasmic; it reads MNNQRKKTGR…LNIMNRRKRS (101 aa). Positions 37–72 are hydrophobic; homodimerization of capsid protein C; that stretch reads LLSGQGPMKLVMAFIAFLRFLAIPPTAGILARWSSF. Residues 101–114 constitute a propeptide, ER anchor for the capsid protein C, removed in mature form by serine protease NS3; the sequence is SVTMLLMLLPTALA. The helical transmembrane segment at 102–119 threads the bilayer; sequence VTMLLMLLPTALAFHLTT. Over 120-242 the chain is Extracellular; the sequence is RGGEPTLIVS…QIQKVETWAL (123 aa). Asn183 carries an N-linked (GlcNAc...) asparagine; by host glycan. A helical membrane pass occupies residues 243–260; the sequence is RHPGFTVIGLFLAHAIGT. A topological domain (cytoplasmic) is located at residue Ser261. A helical membrane pass occupies residues 262–280; the sequence is ITQKGIIFILLMLVTPSMA. Topologically, residues 281–725 are extracellular; it reads MRCVGIGNRD…IHQIFGTAYG (445 aa). 4 disulfide bridges follow: Cys283/Cys310, Cys340/Cys401, Cys354/Cys385, and Cys372/Cys396. The N-linked (GlcNAc...) asparagine; by host glycan is linked to Asn347. Positions 378-391 are fusion peptide; the sequence is DRGWGNGCGLFGKG. A glycan (N-linked (GlcNAc...) asparagine; by host) is linked at Asn433. Cystine bridges form between Cys465–Cys565 and Cys582–Cys613. Residues 726–746 form a helical membrane-spanning segment; that stretch reads ILFSGVSWTMKIGIGILLTWL. The Cytoplasmic portion of the chain corresponds to 747–752; the sequence is GLNSRS. A helical membrane pass occupies residues 753 to 775; the sequence is TSLSMTCIAVGMVTLYLGVMVQA. The Extracellular segment spans residues 776–791; that stretch reads DSGCVINWKGKELKCG. A disulfide bridge connects residues Cys779 and Cys790.

As to quaternary structure, homodimer. Interacts (via N-terminus) with host EXOC1 (via C-terminus); this interaction results in EXOC1 degradation through the proteasome degradation pathway. Forms heterodimers with envelope protein E in the endoplasmic reticulum and Golgi. In terms of assembly, homodimer; in the endoplasmic reticulum and Golgi. Interacts with protein prM. Interacts with non-structural protein 1. As to quaternary structure, homodimer; Homohexamer when secreted. Interacts with envelope protein E. Specific enzymatic cleavages in vivo yield mature proteins. Cleavages in the lumen of endoplasmic reticulum are performed by host signal peptidase, wereas cleavages in the cytoplasmic side are performed by serine protease NS3. Signal cleavage at the 2K-4B site requires a prior NS3 protease-mediated cleavage at the 4A-2K site. Post-translationally, N-glycosylated. In terms of processing, N-glycosylated. The excreted form is glycosylated and this is required for efficient secretion of the protein from infected cells.

It localises to the virion. Its subcellular location is the host nucleus. It is found in the host cytoplasm. The protein resides in the host perinuclear region. The protein localises to the secreted. It localises to the virion membrane. Its subcellular location is the host endoplasmic reticulum membrane. Plays a role in virus budding by binding to the cell membrane and gathering the viral RNA into a nucleocapsid that forms the core of a mature virus particle. During virus entry, may induce genome penetration into the host cytoplasm after hemifusion induced by the surface proteins. Can migrate to the cell nucleus where it modulates host functions. Overcomes the anti-viral effects of host EXOC1 by sequestering and degrading the latter through the proteasome degradation pathway. In terms of biological role, inhibits RNA silencing by interfering with host Dicer. Functionally, prevents premature fusion activity of envelope proteins in trans-Golgi by binding to envelope protein E at pH6.0. After virion release in extracellular space, gets dissociated from E dimers. Its function is as follows. Acts as a chaperone for envelope protein E during intracellular virion assembly by masking and inactivating envelope protein E fusion peptide. prM is the only viral peptide matured by host furin in the trans-Golgi network probably to avoid catastrophic activation of the viral fusion activity in acidic GolGi compartment prior to virion release. prM-E cleavage is inefficient, and many virions are only partially matured. These uncleaved prM would play a role in immune evasion. May play a role in virus budding. Exerts cytotoxic effects by activating a mitochondrial apoptotic pathway through M ectodomain. May display a viroporin activity. In terms of biological role, binds to host cell surface receptor and mediates fusion between viral and cellular membranes. Envelope protein is synthesized in the endoplasmic reticulum in the form of heterodimer with protein prM. They play a role in virion budding in the ER, and the newly formed immature particle is covered with 60 spikes composed of heterodimer between precursor prM and envelope protein E. The virion is transported to the Golgi apparatus where the low pH causes dissociation of PrM-E heterodimers and formation of E homodimers. prM-E cleavage is inefficient, and many virions are only partially matured. These uncleaved prM would play a role in immune evasion. Functionally, involved in immune evasion, pathogenesis and viral replication. Once cleaved off the polyprotein, is targeted to three destinations: the viral replication cycle, the plasma membrane and the extracellular compartment. Essential for viral replication. Required for formation of the replication complex and recruitment of other non-structural proteins to the ER-derived membrane structures. Excreted as a hexameric lipoparticle that plays a role against host immune response. Antagonizing the complement function. Binds to the host macrophages and dendritic cells. Inhibits signal transduction originating from Toll-like receptor 3 (TLR3). Its function is as follows. Disrupts the host endothelial glycocalyx layer of host pulmonary microvascular endothelial cells, inducing degradation of sialic acid and shedding of heparan sulfate proteoglycans. NS1 induces expression of sialidases, heparanase, and activates cathepsin L, which activates heparanase via enzymatic cleavage. These effects are probably linked to the endothelial hyperpermeability observed in severe dengue disease. This chain is Genome polyprotein, found in Dengue virus type 1 (strain Jamaica/CV1636/1977) (DENV-1).